The primary structure comprises 117 residues: Large ribosomal subunit protein bL20c (117 aa).

This sequence belongs to the bacterial ribosomal protein bL20 family.

Its subcellular location is the plastid. The protein resides in the chloroplast. Binds directly to 23S ribosomal RNA and is necessary for the in vitro assembly process of the 50S ribosomal subunit. It is not involved in the protein synthesizing functions of that subunit. This is Large ribosomal subunit protein bL20c from Nasturtium officinale (Watercress).